A 202-amino-acid polypeptide reads, in one-letter code: Na(+)-translocating NADH-quinone reductase subunit E (202 aa).

Helical transmembrane passes span 5-25 (VSLF…FLGM), 35-55 (VSTA…TVPL), 81-101 (FLGL…LEMF), 114-134 (GVFL…LFMV), 144-164 (LTYG…LAGI), and 180-200 (LGIT…FGGM).

This sequence belongs to the NqrDE/RnfAE family. Composed of six subunits; NqrA, NqrB, NqrC, NqrD, NqrE and NqrF.

The protein localises to the cell inner membrane. The enzyme catalyses a ubiquinone + n Na(+)(in) + NADH + H(+) = a ubiquinol + n Na(+)(out) + NAD(+). In terms of biological role, NQR complex catalyzes the reduction of ubiquinone-1 to ubiquinol by two successive reactions, coupled with the transport of Na(+) ions from the cytoplasm to the periplasm. NqrA to NqrE are probably involved in the second step, the conversion of ubisemiquinone to ubiquinol. In Psychrobacter sp. (strain PRwf-1), this protein is Na(+)-translocating NADH-quinone reductase subunit E.